Reading from the N-terminus, the 920-residue chain is MRSLTVASRHPGAAFSTRRRPLLHPAAAGRDSTFQRCWRWEKTQDSSFGSSLRTSRLPRTVHGDILKNLLAPTAGAVSVEQAEAIADLPKGDMWSVHKFGGTCMGTSERIHNVADIVLRDPSERKLVVVSAMSKVTDMMYNLVNKAQSRDDSYIAVLDEVFDKHMTTAKDLLAGEDLARFLSQLHADISNLKAMLRAIYIAGHATESFSDFVVGHGELWSAQMLSYAIQKSGTPCSWMDTREVLVVNPSGANQVDPDYLESEKRLEKWFSRCPAETIIATGFIASTPENIPTTLKRDGSDFSAAIIGSLVKARQVTIWTDVDGVFSADPRKVSEAVILSTLSYQEAWEMSYFGANVLHPRTIIPVMKYNIPIVIRNIFNTSAPGTMICQQPANENGDLEACVKAFATIDKLALVNVEGTGMAGVPGTANAIFGAVKDVGANVIMISQASSEHSVCFAVPEKEVALVSAALHARFREALAAGRLSKVEVIHNCSILATVGLRMASTPGVSATLFDALAKANINVRAIAQGCSEYNITIVLKQEDCVRALRAAHSRFFLSKTTLAVGIIGPGLIGRTLLNQLKDQAAVLKENMNIDLRVMGIAGSRTMLLSDIGVDLTQWKEKLQTEAEPANLDKFVHHLSENHFFPNRVLVDCTADTSVASHYYDWLKKGIHVITPNKKANSGPLDRYLKLRTLQRASYTHYFYEATVGAGLPIISTLRGLLETGDKILRIEGIFSGTLSYIFNNFEGARTFSDVVAEAKKAGYTEPDPRDDLSGTDVARKVIILARESGLGLELSDIPVRSLVPEALKSCTSADEYMQKLPSFDEDWARERKNAEAAGEVLRYVGVVDVVSKKGQVELRAYKRDHPFAQLSGSDNIIAFTTSRYKDQPLIVRGPGAGAEVTAGGVFCDILRLSSYLGAPS.

The disordered stretch occupies residues 1-21; it reads MRSLTVASRHPGAAFSTRRRP. The N-terminal 92 residues, 1 to 92, are a transit peptide targeting the chloroplast; that stretch reads MRSLTVASRH…EAIADLPKGD (92 aa). Residues 93-341 are aspartokinase; the sequence is MWSVHKFGGT…VSEAVILSTL (249 aa). The tract at residues 342-566 is interface; sequence SYQEAWEMSY…LSKTTLAVGI (225 aa). ACT domains follow at residues 416 to 491 and 497 to 574; these read VEGT…VIHN and TVGL…LIGR. The segment at 567-920 is homoserine dehydrogenase; the sequence is IGPGLIGRTL…RLSSYLGAPS (354 aa). NAD(+) contacts are provided by Ile-572 and Ala-601. NADP(+) is bound at residue Ile-572. An NADPH-binding site is contributed by Ile-572. Positions 604, 653, and 677 each coordinate NADP(+). Thr-653 contributes to the NAD(+) binding site. NADPH contacts are provided by Thr-653 and Lys-677. Residues Glu-704, Val-707, Ala-709, and Leu-711 each contribute to the Na(+) site. The NADP(+) site is built by Gly-762 and Glu-765. L-homoserine-binding residues include Glu-765 and Asp-776. Catalysis depends on Lys-780, which acts as the Proton donor. NAD(+) is bound at residue Gly-897. NADP(+) is bound at residue Gly-897. Gly-897 lines the NADPH pocket.

This sequence in the N-terminal section; belongs to the aspartokinase family. In the C-terminal section; belongs to the homoserine dehydrogenase family. As to quaternary structure, homo- or heterodimer. A metal cation is required as a cofactor.

It localises to the plastid. The protein resides in the chloroplast. The enzyme catalyses L-homoserine + NADP(+) = L-aspartate 4-semialdehyde + NADPH + H(+). It carries out the reaction L-homoserine + NAD(+) = L-aspartate 4-semialdehyde + NADH + H(+). The catalysed reaction is L-aspartate + ATP = 4-phospho-L-aspartate + ADP. It functions in the pathway amino-acid biosynthesis; L-lysine biosynthesis via DAP pathway; (S)-tetrahydrodipicolinate from L-aspartate: step 1/4. Its pathway is amino-acid biosynthesis; L-methionine biosynthesis via de novo pathway; L-homoserine from L-aspartate: step 1/3. The protein operates within amino-acid biosynthesis; L-methionine biosynthesis via de novo pathway; L-homoserine from L-aspartate: step 3/3. It participates in amino-acid biosynthesis; L-threonine biosynthesis; L-threonine from L-aspartate: step 1/5. It functions in the pathway amino-acid biosynthesis; L-threonine biosynthesis; L-threonine from L-aspartate: step 3/5. Bifunctional aspartate kinase and homoserine dehydrogenase that catalyzes the first and the third steps toward the synthesis of lysine, methionine and threonine from aspartate. The polypeptide is Bifunctional aspartokinase/homoserine dehydrogenase 1, chloroplastic (AKHSDH1) (Zea mays (Maize)).